The primary structure comprises 299 residues: UDP-N-acetylenolpyruvoylglucosamine reductase (299 aa).

One can recognise an FAD-binding PCMH-type domain in the interval 28-193 (KVGGPADILA…LSAKFELQAG (166 aa)). Arg-172 is an active-site residue. Ser-222 serves as the catalytic Proton donor. Residue Glu-292 is part of the active site.

The cofactor is FAD.

Its subcellular location is the cytoplasm. The catalysed reaction is UDP-N-acetyl-alpha-D-muramate + NADP(+) = UDP-N-acetyl-3-O-(1-carboxyvinyl)-alpha-D-glucosamine + NADPH + H(+). It functions in the pathway cell wall biogenesis; peptidoglycan biosynthesis. Cell wall formation. The protein is UDP-N-acetylenolpyruvoylglucosamine reductase of Lactococcus lactis subsp. cremoris (strain MG1363).